We begin with the raw amino-acid sequence, 836 residues long: Neuroligin-2 (836 aa).

A signal peptide spans 1 to 14 (MWLLALCLVGLAGA). Residues 15–678 (QRGGGGPGGG…DSRDYSTELS (664 aa)) lie on the Extracellular side of the membrane. 2 N-linked (GlcNAc...) asparagine glycosylation sites follow: asparagine 98 and asparagine 136. Intrachain disulfides connect cysteine 106/cysteine 141, cysteine 317/cysteine 328, and cysteine 487/cysteine 521. Asparagine 522 carries N-linked (GlcNAc...) asparagine glycosylation. Residues 623–661 (PPYATRWPPRTPGPGTSGTRRPPPPATLPPESDIDLGPR) form a disordered region. Residues 679–699 (VTVAVGASLLFLNILAFAALY) traverse the membrane as a helical segment. Positions 679 to 699 (VTVAVGASLLFLNILAFAALY) are required for interaction with LHFPL4. At 700-836 (YKRDRRQELR…LPHPHSTTRV (137 aa)) the chain is on the cytoplasmic side. 2 disordered regions span residues 711-735 (RRLS…TAGR) and 791-836 (LLPS…TTRV). Serine 714 and serine 719 each carry phosphoserine. A compositionally biased stretch (gly residues) spans 717 to 728 (GGSGSGVPGGGP). A compositionally biased stretch (pro residues) spans 796–819 (LGPPPPPPPPSLHPFGPFPPPPPT). A compositionally biased stretch (polar residues) spans 824–836 (NNTLPHPHSTTRV).

The protein belongs to the type-B carboxylesterase/lipase family. Interacts with neurexins NRXN1, NRXN2 and NRXN3. Interaction with neurexins is mediated by heparan sulfate glycan modification on neurexin. Interacts (via its C-terminus) with DLG4/PSD-95 (via PDZ domain 3). Interacts with PATJ. Interacts with MDGA2. Interacts with GPHN. Interacts with MDGA1. Found in a complex with MAGI2 and IGSF9B, where it interacts with MAGI2 (via WW 1, WW 2 and PDZ 2 domains). Identified in a complex of 720 kDa composed of LHFPL4, NLGN2, GABRA1, GABRB2, GABRG2 and GABRB3. Interacts with LHFPL4; leading to mutual regulation of the protein level and synaptic clustering. Interacts with GABRA1. In terms of tissue distribution, brain and arteries. Detected in the retina outer plexiform layer (at protein level). Widely expressed. Detected in heart, brain, spleen, lung, liver, skeletal muscle, kidney and testis.

The protein localises to the cell membrane. It is found in the postsynaptic cell membrane. It localises to the presynaptic cell membrane. Its function is as follows. Transmembrane scaffolding protein involved in cell-cell interactions via its interactions with neurexin family members. Mediates cell-cell interactions both in neurons and in other types of cells, such as Langerhans beta cells. Mediates cell-cell interactions between Langerhans beta cells and modulates insulin secretion. Plays a role in synapse function and synaptic signal transmission, especially via gamma-aminobutyric acid receptors (GABA(A) receptors). Functions by recruiting and clustering synaptic proteins. Promotes clustering of postsynaptic GABRG2 and GPHN. Promotes clustering of postsynaptic LHFPL4. Modulates signaling by inhibitory synapses, and thereby plays a role in controlling the ratio of signaling by excitatory and inhibitory synapses and information processing. Required for normal signal amplitude from inhibitory synapses, but is not essential for normal signal frequency. May promote the initial formation of synapses, but is not essential for this. In vitro, triggers the de novo formation of presynaptic structures. The polypeptide is Neuroligin-2 (Nlgn2) (Mus musculus (Mouse)).